The chain runs to 602 residues: Elongation factor 4 (602 aa).

Positions 7–189 (KYIRNFSIVA…AIVNKVPAPD (183 aa)) constitute a tr-type G domain. Residues 19–24 (DHGKST) and 136–139 (NKID) contribute to the GTP site.

It belongs to the TRAFAC class translation factor GTPase superfamily. Classic translation factor GTPase family. LepA subfamily.

Its subcellular location is the cell membrane. It carries out the reaction GTP + H2O = GDP + phosphate + H(+). Required for accurate and efficient protein synthesis under certain stress conditions. May act as a fidelity factor of the translation reaction, by catalyzing a one-codon backward translocation of tRNAs on improperly translocated ribosomes. Back-translocation proceeds from a post-translocation (POST) complex to a pre-translocation (PRE) complex, thus giving elongation factor G a second chance to translocate the tRNAs correctly. Binds to ribosomes in a GTP-dependent manner. The sequence is that of Elongation factor 4 from Clostridium botulinum (strain 657 / Type Ba4).